A 161-amino-acid chain; its full sequence is Cyclic pyranopterin monophosphate synthase (161 aa).

Substrate-binding positions include 78 to 80 (LCH) and 116 to 117 (ME). The active site involves Asp-131.

It belongs to the MoaC family. In terms of assembly, homohexamer; trimer of dimers.

The enzyme catalyses (8S)-3',8-cyclo-7,8-dihydroguanosine 5'-triphosphate = cyclic pyranopterin phosphate + diphosphate. Its pathway is cofactor biosynthesis; molybdopterin biosynthesis. Its function is as follows. Catalyzes the conversion of (8S)-3',8-cyclo-7,8-dihydroguanosine 5'-triphosphate to cyclic pyranopterin monophosphate (cPMP). The chain is Cyclic pyranopterin monophosphate synthase from Bordetella parapertussis (strain 12822 / ATCC BAA-587 / NCTC 13253).